The sequence spans 378 residues: Packaging protein 3 (378 aa).

Disordered stretches follow at residues 1 to 73 and 355 to 378; these read MHPV…EGPV and SRPP…DDFI. An interaction with packaging protein 1 region spans residues 1-178; that stretch reads MHPVLQSVRN…AFGEELRNTC (178 aa). Low complexity-rich tracts occupy residues 16 to 35 and 49 to 58; these read GGPH…SVRR and PGAGATPTAG. Serine 362 is modified (phosphoserine; by host). Residues 363–378 are compositionally biased toward acidic residues; it reads FADEGPSESDDEDDFI.

The protein belongs to the adenoviridae packaging protein 3 family. As to quaternary structure, part of the genome packaging complex composed of packaging proteins 1, 2 and 3; this complex specifically binds to the packaging sequence on the left end of viral genomic DNA and performs packaging of the viral genome. Interacts with hexon-linking protein IIIa; this interaction is required to promote correct genome packaging. In terms of processing, cleaved at different sites by the viral protease during virion maturation.

The protein resides in the host nucleus. Functionally, involved in viral genome packaging through its interaction with packaging proteins 1 and 2. After proteolytic cleavage by adenovirus protease, L1 52/55k protein is removed from the capsid during viral maturation. The sequence is that of Packaging protein 3 from Galliformes (FAdV-1).